Consider the following 514-residue polypeptide: Adenylosuccinate synthetase 2, chloroplastic (514 aa).

Residues 1–56 constitute a chloroplast transit peptide; the sequence is MAMAAAAAVASQGLLATSSQQQKKSSAKLICNAATFFSGKRLLWVKSCNNGAVGLR. GTP-binding positions include 100–106 and 128–130; these read GDEGKGK and GHT. The active-site Proton acceptor is D101. The Mg(2+) site is built by D101 and G128. Residues 101-104, 126-129, T218, R232, Q312, T327, and R391 each bind IMP; these read DEGK and NAGH. H129 serves as the catalytic Proton donor. 387–393 lines the substrate pocket; it reads TTTGRPR. GTP-binding positions include R393, 419–421, and 502–504; these read KLD and GVG.

This sequence belongs to the adenylosuccinate synthetase family. As to quaternary structure, homodimer. The cofactor is Mg(2+).

It localises to the plastid. The protein localises to the chloroplast. It carries out the reaction IMP + L-aspartate + GTP = N(6)-(1,2-dicarboxyethyl)-AMP + GDP + phosphate + 2 H(+). It functions in the pathway purine metabolism; AMP biosynthesis via de novo pathway; AMP from IMP: step 1/2. Its function is as follows. Plays an important role in the de novo pathway and in the salvage pathway of purine nucleotide biosynthesis. Catalyzes the first committed step in the biosynthesis of AMP from IMP. The protein is Adenylosuccinate synthetase 2, chloroplastic of Physcomitrium patens (Spreading-leaved earth moss).